A 342-amino-acid polypeptide reads, in one-letter code: Holliday junction branch migration complex subunit RuvB (342 aa).

The interval 1 to 181 is large ATPase domain (RuvB-L); it reads MENRMVTPFD…FGMLCAMEFY (181 aa). ATP contacts are provided by residues Leu-20, Arg-21, Gly-62, Lys-65, Thr-66, Thr-67, 128–130, Arg-171, Tyr-181, and Arg-218; that span reads EDY. Mg(2+) is bound at residue Thr-66. The interval 182–252 is small ATPAse domain (RuvB-S); sequence TDEELMEIVV…GAKAALDLLE (71 aa). The interval 255-342 is head domain (RuvB-H); the sequence is KEGLDKIDNK…KDNQVSIFNK (88 aa). Residues Arg-310 and Arg-315 each coordinate DNA.

The protein belongs to the RuvB family. In terms of assembly, homohexamer. Forms an RuvA(8)-RuvB(12)-Holliday junction (HJ) complex. HJ DNA is sandwiched between 2 RuvA tetramers; dsDNA enters through RuvA and exits via RuvB. An RuvB hexamer assembles on each DNA strand where it exits the tetramer. Each RuvB hexamer is contacted by two RuvA subunits (via domain III) on 2 adjacent RuvB subunits; this complex drives branch migration. In the full resolvosome a probable DNA-RuvA(4)-RuvB(12)-RuvC(2) complex forms which resolves the HJ.

It localises to the cytoplasm. The enzyme catalyses ATP + H2O = ADP + phosphate + H(+). The RuvA-RuvB-RuvC complex processes Holliday junction (HJ) DNA during genetic recombination and DNA repair, while the RuvA-RuvB complex plays an important role in the rescue of blocked DNA replication forks via replication fork reversal (RFR). RuvA specifically binds to HJ cruciform DNA, conferring on it an open structure. The RuvB hexamer acts as an ATP-dependent pump, pulling dsDNA into and through the RuvAB complex. RuvB forms 2 homohexamers on either side of HJ DNA bound by 1 or 2 RuvA tetramers; 4 subunits per hexamer contact DNA at a time. Coordinated motions by a converter formed by DNA-disengaged RuvB subunits stimulates ATP hydrolysis and nucleotide exchange. Immobilization of the converter enables RuvB to convert the ATP-contained energy into a lever motion, pulling 2 nucleotides of DNA out of the RuvA tetramer per ATP hydrolyzed, thus driving DNA branch migration. The RuvB motors rotate together with the DNA substrate, which together with the progressing nucleotide cycle form the mechanistic basis for DNA recombination by continuous HJ branch migration. Branch migration allows RuvC to scan DNA until it finds its consensus sequence, where it cleaves and resolves cruciform DNA. This is Holliday junction branch migration complex subunit RuvB from Clostridium botulinum (strain Loch Maree / Type A3).